Reading from the N-terminus, the 380-residue chain is Queuine tRNA-ribosyltransferase (380 aa).

The active-site Proton acceptor is the Asp96. Residues 96-100 (DSGGF), Asp150, Gln193, and Gly220 contribute to the substrate site. Residues 251 to 257 (GVGAPDS) form an RNA binding region. Asp270 functions as the Nucleophile in the catalytic mechanism. The tract at residues 275-279 (TRIAR) is RNA binding; important for wobble base 34 recognition. The Zn(2+) site is built by Cys308, Cys310, Cys313, and His339.

The protein belongs to the queuine tRNA-ribosyltransferase family. Homodimer. Within each dimer, one monomer is responsible for RNA recognition and catalysis, while the other monomer binds to the replacement base PreQ1. Requires Zn(2+) as cofactor.

It carries out the reaction 7-aminomethyl-7-carbaguanine + guanosine(34) in tRNA = 7-aminomethyl-7-carbaguanosine(34) in tRNA + guanine. Its pathway is tRNA modification; tRNA-queuosine biosynthesis. Its function is as follows. Catalyzes the base-exchange of a guanine (G) residue with the queuine precursor 7-aminomethyl-7-deazaguanine (PreQ1) at position 34 (anticodon wobble position) in tRNAs with GU(N) anticodons (tRNA-Asp, -Asn, -His and -Tyr). Catalysis occurs through a double-displacement mechanism. The nucleophile active site attacks the C1' of nucleotide 34 to detach the guanine base from the RNA, forming a covalent enzyme-RNA intermediate. The proton acceptor active site deprotonates the incoming PreQ1, allowing a nucleophilic attack on the C1' of the ribose to form the product. After dissociation, two additional enzymatic reactions on the tRNA convert PreQ1 to queuine (Q), resulting in the hypermodified nucleoside queuosine (7-(((4,5-cis-dihydroxy-2-cyclopenten-1-yl)amino)methyl)-7-deazaguanosine). This Streptococcus pyogenes serotype M1 protein is Queuine tRNA-ribosyltransferase.